The following is a 160-amino-acid chain: Salivary gland broad-spectrum antiviral protein (160 aa).

Residues Val17–Leu37 traverse the membrane as a helical segment. Residues Asn62 and Asn145 are each glycosylated (N-linked (GlcNAc...) asparagine).

Salivary gland (at protein level).

The protein localises to the membrane. (Microbial infection) Modulates replication of Zika virus in salivary glands. Functionally, (Microbial infection) Modulates replication of dengue virus type 2 in salivary glands. Its function is as follows. (Microbial infection) Modulates replication of chikungunya virus in salivary glands. The sequence is that of Salivary gland broad-spectrum antiviral protein from Aedes aegypti (Yellowfever mosquito).